The sequence spans 406 residues: S-adenosylmethionine synthase (406 aa).

Histidine 16 provides a ligand contact to ATP. Aspartate 18 contributes to the Mg(2+) binding site. Glutamate 44 contributes to the K(+) binding site. L-methionine contacts are provided by glutamate 57 and glutamine 109. The tract at residues 109–119 (QSPQIAQGVDE) is flexible loop. ATP contacts are provided by residues 174–176 (DAK), 249–250 (RF), aspartate 258, 264–265 (RK), alanine 281, and lysine 285. Aspartate 258 is a binding site for L-methionine. Lysine 289 is an L-methionine binding site.

Belongs to the AdoMet synthase family. Homotetramer; dimer of dimers. It depends on Mg(2+) as a cofactor. K(+) is required as a cofactor.

It localises to the cytoplasm. It catalyses the reaction L-methionine + ATP + H2O = S-adenosyl-L-methionine + phosphate + diphosphate. It functions in the pathway amino-acid biosynthesis; S-adenosyl-L-methionine biosynthesis; S-adenosyl-L-methionine from L-methionine: step 1/1. In terms of biological role, catalyzes the formation of S-adenosylmethionine (AdoMet) from methionine and ATP. The overall synthetic reaction is composed of two sequential steps, AdoMet formation and the subsequent tripolyphosphate hydrolysis which occurs prior to release of AdoMet from the enzyme. The sequence is that of S-adenosylmethionine synthase from Sphingopyxis alaskensis (strain DSM 13593 / LMG 18877 / RB2256) (Sphingomonas alaskensis).